The sequence spans 122 residues: Small ribosomal subunit protein uS13 (122 aa).

A disordered region spans residues 97-122 (PVRGQRTKTNARTRKGPARTVAGKKK).

It belongs to the universal ribosomal protein uS13 family. As to quaternary structure, part of the 30S ribosomal subunit. Forms a loose heterodimer with protein S19. Forms two bridges to the 50S subunit in the 70S ribosome.

In terms of biological role, located at the top of the head of the 30S subunit, it contacts several helices of the 16S rRNA. In the 70S ribosome it contacts the 23S rRNA (bridge B1a) and protein L5 of the 50S subunit (bridge B1b), connecting the 2 subunits; these bridges are implicated in subunit movement. Contacts the tRNAs in the A and P-sites. This Geobacter sulfurreducens (strain ATCC 51573 / DSM 12127 / PCA) protein is Small ribosomal subunit protein uS13.